Reading from the N-terminus, the 227-residue chain is Cytochrome c oxidase subunit 2 (227 aa).

Residues 1 to 14 are Mitochondrial intermembrane-facing; sequence MAHRAQVGLQDATS. A helical membrane pass occupies residues 15-45; the sequence is PIMEELVIFHDHALMIIFLICFLVLYALFLT. Residues 46 to 59 lie on the Mitochondrial matrix side of the membrane; it reads LTTKLTNTNISDAQ. A helical transmembrane segment spans residues 60-87; the sequence is EMETIWTTLPAIILILIALPSLRILYLT. Topologically, residues 88–227 are mitochondrial intermembrane; that stretch reads DEINDPSFTI…IFEMGPVFAL (140 aa). Residues His-161, Cys-196, Glu-198, Cys-200, His-204, and Met-207 each coordinate Cu cation. Glu-198 provides a ligand contact to Mg(2+).

The protein belongs to the cytochrome c oxidase subunit 2 family. Component of the cytochrome c oxidase (complex IV, CIV), a multisubunit enzyme composed of 14 subunits. The complex is composed of a catalytic core of 3 subunits MT-CO1, MT-CO2 and MT-CO3, encoded in the mitochondrial DNA, and 11 supernumerary subunits COX4I, COX5A, COX5B, COX6A, COX6B, COX6C, COX7A, COX7B, COX7C, COX8 and NDUFA4, which are encoded in the nuclear genome. The complex exists as a monomer or a dimer and forms supercomplexes (SCs) in the inner mitochondrial membrane with NADH-ubiquinone oxidoreductase (complex I, CI) and ubiquinol-cytochrome c oxidoreductase (cytochrome b-c1 complex, complex III, CIII), resulting in different assemblies (supercomplex SCI(1)III(2)IV(1) and megacomplex MCI(2)III(2)IV(2)). Found in a complex with TMEM177, COA6, COX18, COX20, SCO1 and SCO2. Interacts with TMEM177 in a COX20-dependent manner. Interacts with COX20. Interacts with COX16. Cu cation serves as cofactor.

The protein localises to the mitochondrion inner membrane. The enzyme catalyses 4 Fe(II)-[cytochrome c] + O2 + 8 H(+)(in) = 4 Fe(III)-[cytochrome c] + 2 H2O + 4 H(+)(out). Its function is as follows. Component of the cytochrome c oxidase, the last enzyme in the mitochondrial electron transport chain which drives oxidative phosphorylation. The respiratory chain contains 3 multisubunit complexes succinate dehydrogenase (complex II, CII), ubiquinol-cytochrome c oxidoreductase (cytochrome b-c1 complex, complex III, CIII) and cytochrome c oxidase (complex IV, CIV), that cooperate to transfer electrons derived from NADH and succinate to molecular oxygen, creating an electrochemical gradient over the inner membrane that drives transmembrane transport and the ATP synthase. Cytochrome c oxidase is the component of the respiratory chain that catalyzes the reduction of oxygen to water. Electrons originating from reduced cytochrome c in the intermembrane space (IMS) are transferred via the dinuclear copper A center (CU(A)) of subunit 2 and heme A of subunit 1 to the active site in subunit 1, a binuclear center (BNC) formed by heme A3 and copper B (CU(B)). The BNC reduces molecular oxygen to 2 water molecules using 4 electrons from cytochrome c in the IMS and 4 protons from the mitochondrial matrix. In Pongo pygmaeus (Bornean orangutan), this protein is Cytochrome c oxidase subunit 2 (MT-CO2).